The chain runs to 208 residues: Uracil phosphoribosyltransferase (208 aa).

5-phospho-alpha-D-ribose 1-diphosphate contacts are provided by residues arginine 78, arginine 103, and aspartate 130–serine 138. Residues isoleucine 193 and glycine 198–alanine 200 contribute to the uracil site. Aspartate 199 contacts 5-phospho-alpha-D-ribose 1-diphosphate.

Belongs to the UPRTase family. Mg(2+) serves as cofactor.

It carries out the reaction UMP + diphosphate = 5-phospho-alpha-D-ribose 1-diphosphate + uracil. Its pathway is pyrimidine metabolism; UMP biosynthesis via salvage pathway; UMP from uracil: step 1/1. Allosterically activated by GTP. In terms of biological role, catalyzes the conversion of uracil and 5-phospho-alpha-D-ribose 1-diphosphate (PRPP) to UMP and diphosphate. The protein is Uracil phosphoribosyltransferase of Shewanella sediminis (strain HAW-EB3).